A 107-amino-acid chain; its full sequence is Large ribosomal subunit protein eL33A (107 aa).

An N-acetylalanine; partial modification is found at alanine 2. Lysine 47 participates in a covalent cross-link: Glycyl lysine isopeptide (Lys-Gly) (interchain with G-Cter in ubiquitin).

It belongs to the eukaryotic ribosomal protein eL33 family. As to quaternary structure, component of the large ribosomal subunit (LSU). Mature yeast ribosomes consist of a small (40S) and a large (60S) subunit. The 40S small subunit contains 1 molecule of ribosomal RNA (18S rRNA) and 33 different proteins (encoded by 57 genes). The large 60S subunit contains 3 rRNA molecules (25S, 5.8S and 5S rRNA) and 46 different proteins (encoded by 81 genes). In terms of processing, N-terminally acetylated by acetyltransferase NatA.

The protein localises to the cytoplasm. Its function is as follows. Component of the ribosome, a large ribonucleoprotein complex responsible for the synthesis of proteins in the cell. The small ribosomal subunit (SSU) binds messenger RNAs (mRNAs) and translates the encoded message by selecting cognate aminoacyl-transfer RNA (tRNA) molecules. The large subunit (LSU) contains the ribosomal catalytic site termed the peptidyl transferase center (PTC), which catalyzes the formation of peptide bonds, thereby polymerizing the amino acids delivered by tRNAs into a polypeptide chain. The nascent polypeptides leave the ribosome through a tunnel in the LSU and interact with protein factors that function in enzymatic processing, targeting, and the membrane insertion of nascent chains at the exit of the ribosomal tunnel. This chain is Large ribosomal subunit protein eL33A, found in Saccharomyces cerevisiae (strain ATCC 204508 / S288c) (Baker's yeast).